Consider the following 192-residue polypeptide: Sarcoplasmic calcium-binding protein, beta chain (192 aa).

Ala-1 carries the N-acetylalanine modification. EF-hand domains lie at Trp-4 to Ile-39, Ile-56 to Gly-91, Ala-100 to Phe-135, and Ala-136 to Phe-171. Ca(2+)-binding residues include Asp-17, Asp-19, Asp-21, Asp-28, Asp-69, Asn-71, Asp-73, Glu-75, Glu-80, Asp-113, Asp-115, Asp-117, Met-119, and Glu-124.

In terms of assembly, SCPs from crayfish, lobster, and shrimp are polymorphic dimers; three isotypes (alpha-alpha, alpha-beta, and beta-beta) have been identified.

Functionally, like parvalbumins, SCPs seem to be more abundant in fast contracting muscles, but no functional relationship can be established from this distribution. This Penaeus sp. (Penoeid shrimp) protein is Sarcoplasmic calcium-binding protein, beta chain.